A 250-amino-acid chain; its full sequence is MAGSEELGLREDTLRVLAAFLRRGEAAGSPVPTPPRSPAQEEPTDFLSRLRRCLPCSLGRGAAPSESPRPCSLPIRPCYGLEPGPATPDFYALVAQRLEQLVQEQLKSPPSPELQGPPSTEKEAILRRLVALLEEEAEVINQKLASDPALRSKLVRLSSDSFARLVELFCSRDDSSRPSRACPGPPPPSPEPLARLALAMELSRRVAGLGGTLAGLSVEHVHSFTPWIQAHGGWEGILAVSPVDLNLPLD.

A disordered region spans residues 24-46; it reads GEAAGSPVPTPPRSPAQEEPTDF. Ser-29 carries the phosphoserine modification. At Thr-33 the chain carries Phosphothreonine. The residue at position 37 (Ser-37) is a Phosphoserine. Arg-60 is subject to Omega-N-methylarginine. Phosphoserine occurs at positions 111, 158, 159, 161, and 189. The BH2 motif lies at 227 to 238; the sequence is WIQAHGGWEGIL.

Belongs to the Bcl-2 family. In terms of tissue distribution, expressed mainly in breast, thymus, prostate, fetal liver, colon, placenta, pancreas, small intestine, spinal cord, kidney, and bone marrow and to a lesser extent in many other tissues. Isoform 2 is primarily expressed in skeletal muscle.

The polypeptide is Bcl-2-like protein 12 (Homo sapiens (Human)).